The chain runs to 283 residues: uncharacterized protein (283 aa).

The span at 208–232 (SMENKVNETQNSKEDEKKKNDGDGK) shows a compositional bias: basic and acidic residues. Residues 208–237 (SMENKVNETQNSKEDEKKKNDGDGKRSKKK) are disordered.

This is an uncharacterized protein from Saccharomyces cerevisiae (strain ATCC 204508 / S288c) (Baker's yeast).